Here is a 151-residue protein sequence, read N- to C-terminus: MATLETRLAEMLTPAVEAAGYVVWGIEYVQAGKHSILRVYIDSEQGISVDDCADASRQISAILDVEDPISNEYTLEVSSPGLDRPLFNAAQYARYVGEDVKVQLTMPVEGSRNLKGVIDKVEGQMLTIKVDGKTLVVALDNIRKGNIIAKF.

This sequence belongs to the RimP family.

It is found in the cytoplasm. Required for maturation of 30S ribosomal subunits. The chain is Ribosome maturation factor RimP from Shewanella amazonensis (strain ATCC BAA-1098 / SB2B).